The chain runs to 346 residues: N-acetyl-gamma-glutamyl-phosphate reductase (346 aa).

Residue Cys154 is part of the active site.

This sequence belongs to the NAGSA dehydrogenase family. Type 1 subfamily.

The protein resides in the cytoplasm. The catalysed reaction is N-acetyl-L-glutamate 5-semialdehyde + phosphate + NADP(+) = N-acetyl-L-glutamyl 5-phosphate + NADPH + H(+). It functions in the pathway amino-acid biosynthesis; L-arginine biosynthesis; N(2)-acetyl-L-ornithine from L-glutamate: step 3/4. In terms of biological role, catalyzes the NADPH-dependent reduction of N-acetyl-5-glutamyl phosphate to yield N-acetyl-L-glutamate 5-semialdehyde. This chain is N-acetyl-gamma-glutamyl-phosphate reductase, found in Rhodopirellula baltica (strain DSM 10527 / NCIMB 13988 / SH1).